Here is a 370-residue protein sequence, read N- to C-terminus: GDSL esterase/lipase At1g33811 (370 aa).

Positions 1 to 24 (MGILRFVLLISLNLVLFGFKTTVS) are cleaved as a signal peptide. The Nucleophile role is filled by Ser41. N-linked (GlcNAc...) asparagine glycans are attached at residues Asn203, Asn241, and Asn242. Residues Asp336 and His339 contribute to the active site.

This sequence belongs to the 'GDSL' lipolytic enzyme family.

Its subcellular location is the secreted. The protein is GDSL esterase/lipase At1g33811 of Arabidopsis thaliana (Mouse-ear cress).